The chain runs to 454 residues: tRNA modification GTPase MnmE (454 aa).

Positions 23, 80, and 120 each coordinate (6S)-5-formyl-5,6,7,8-tetrahydrofolate. The TrmE-type G domain maps to 216 to 377 (GMKVVIAGRP…LRNHLKQSMG (162 aa)). N226 provides a ligand contact to K(+). GTP-binding positions include 226–231 (NAGKSS), 245–251 (TDIAGTT), 270–273 (DTAG), 335–338 (NKAD), and 358–360 (SAR). Residue S230 coordinates Mg(2+). Residues T245, I247, and T250 each coordinate K(+). T251 is a Mg(2+) binding site. Residue K454 coordinates (6S)-5-formyl-5,6,7,8-tetrahydrofolate.

Belongs to the TRAFAC class TrmE-Era-EngA-EngB-Septin-like GTPase superfamily. TrmE GTPase family. As to quaternary structure, homodimer. Heterotetramer of two MnmE and two MnmG subunits. Requires K(+) as cofactor.

The protein localises to the cytoplasm. Functionally, exhibits a very high intrinsic GTPase hydrolysis rate. Involved in the addition of a carboxymethylaminomethyl (cmnm) group at the wobble position (U34) of certain tRNAs, forming tRNA-cmnm(5)s(2)U34. The sequence is that of tRNA modification GTPase MnmE from Shigella dysenteriae serotype 1 (strain Sd197).